The chain runs to 653 residues: Transcription factor Ken 1 (653 aa).

The BTB domain occupies threonine 35–serine 103. Disordered stretches follow at residues asparagine 126–arginine 215, asparagine 234–alanine 305, leucine 429–alanine 451, and glutamate 512–serine 534. A compositionally biased stretch (polar residues) spans asparagine 145–valine 157. Residues glycine 251–serine 272 are compositionally biased toward basic residues. Over residues serine 286–aspartate 299 the composition is skewed to polar residues. The span at serine 430–asparagine 444 shows a compositional bias: low complexity. Residues alanine 520–serine 534 are compositionally biased toward gly residues. 3 consecutive C2H2-type zinc fingers follow at residues tyrosine 555–histidine 577, phenylalanine 583–histidine 606, and tyrosine 619–histidine 641.

The protein localises to the nucleus. Its function is as follows. Transcription factor required for terminalia development. Negative regulator of the JAK/STAT pathway: represses JAK/STAT-dependent expression of ventral veins lacking (vvl) in the posterior spiracles. In Culex quinquefasciatus (Southern house mosquito), this protein is Transcription factor Ken 1.